A 47-amino-acid polypeptide reads, in one-letter code: Cytochrome b559 subunit beta (47 aa).

A helical membrane pass occupies residues 22–38; the sequence is WLAVHTLAIPTVFFLGA. Histidine 26 contributes to the heme binding site.

The protein belongs to the PsbE/PsbF family. As to quaternary structure, heterodimer of an alpha subunit and a beta subunit. PSII is composed of 1 copy each of membrane proteins PsbA, PsbB, PsbC, PsbD, PsbE, PsbF, PsbH, PsbI, PsbJ, PsbK, PsbL, PsbM, PsbT, PsbX, PsbY, PsbZ, Psb30/Ycf12, peripheral proteins PsbO, CyanoQ (PsbQ), PsbU, PsbV and a large number of cofactors. It forms dimeric complexes. Heme b serves as cofactor.

It localises to the cellular thylakoid membrane. Its function is as follows. This b-type cytochrome is tightly associated with the reaction center of photosystem II (PSII). PSII is a light-driven water:plastoquinone oxidoreductase that uses light energy to abstract electrons from H(2)O, generating O(2) and a proton gradient subsequently used for ATP formation. It consists of a core antenna complex that captures photons, and an electron transfer chain that converts photonic excitation into a charge separation. The polypeptide is Cytochrome b559 subunit beta (Synechococcus sp. (strain JA-3-3Ab) (Cyanobacteria bacterium Yellowstone A-Prime)).